We begin with the raw amino-acid sequence, 391 residues long: Ferrochelatase (391 aa).

H196 and E281 together coordinate Fe cation.

It belongs to the ferrochelatase family.

The protein resides in the cytoplasm. It carries out the reaction heme b + 2 H(+) = protoporphyrin IX + Fe(2+). It functions in the pathway porphyrin-containing compound metabolism; protoheme biosynthesis; protoheme from protoporphyrin-IX: step 1/1. Its function is as follows. Catalyzes the ferrous insertion into protoporphyrin IX. This chain is Ferrochelatase, found in Prochlorococcus marinus (strain MIT 9215).